A 499-amino-acid polypeptide reads, in one-letter code: UDP-N-acetylmuramoylalanine--D-glutamate ligase (499 aa).

ATP is bound at residue 129–135 (GTNGKTT).

The protein belongs to the MurCDEF family.

It is found in the cytoplasm. The catalysed reaction is UDP-N-acetyl-alpha-D-muramoyl-L-alanine + D-glutamate + ATP = UDP-N-acetyl-alpha-D-muramoyl-L-alanyl-D-glutamate + ADP + phosphate + H(+). The protein operates within cell wall biogenesis; peptidoglycan biosynthesis. Functionally, cell wall formation. Catalyzes the addition of glutamate to the nucleotide precursor UDP-N-acetylmuramoyl-L-alanine (UMA). The polypeptide is UDP-N-acetylmuramoylalanine--D-glutamate ligase (Ralstonia nicotianae (strain ATCC BAA-1114 / GMI1000) (Ralstonia solanacearum)).